The following is a 319-amino-acid chain: HPr kinase/phosphorylase (319 aa).

Active-site residues include histidine 141 and lysine 162. Residue glycine 156–serine 163 participates in ATP binding. Serine 163 provides a ligand contact to Mg(2+). Aspartate 180 serves as the catalytic Proton acceptor; for phosphorylation activity. Proton donor; for dephosphorylation activity. An important for the catalytic mechanism of both phosphorylation and dephosphorylation region spans residues methionine 204–aspartate 213. Glutamate 205 lines the Mg(2+) pocket. Residue arginine 246 is part of the active site. Residues proline 267 to arginine 272 are important for the catalytic mechanism of dephosphorylation.

This sequence belongs to the HPrK/P family. In terms of assembly, homohexamer. Requires Mg(2+) as cofactor.

It carries out the reaction [HPr protein]-L-serine + ATP = [HPr protein]-O-phospho-L-serine + ADP + H(+). The enzyme catalyses [HPr protein]-O-phospho-L-serine + phosphate + H(+) = [HPr protein]-L-serine + diphosphate. Functionally, catalyzes the ATP- as well as the pyrophosphate-dependent phosphorylation of a specific serine residue in HPr, a phosphocarrier protein of the phosphoenolpyruvate-dependent sugar phosphotransferase system (PTS). HprK/P also catalyzes the pyrophosphate-producing, inorganic phosphate-dependent dephosphorylation (phosphorolysis) of seryl-phosphorylated HPr (P-Ser-HPr). The two antagonistic activities of HprK/P are regulated by several intracellular metabolites, which change their concentration in response to the absence or presence of rapidly metabolisable carbon sources (glucose, fructose, etc.) in the growth medium. Therefore, by controlling the phosphorylation state of HPr, HPrK/P is a sensor enzyme that plays a major role in the regulation of carbon metabolism and sugar transport: it mediates carbon catabolite repression (CCR), and regulates PTS-catalyzed carbohydrate uptake and inducer exclusion. In Lactobacillus johnsonii (strain CNCM I-12250 / La1 / NCC 533), this protein is HPr kinase/phosphorylase.